The primary structure comprises 525 residues: Vesicular inhibitory amino acid transporter (525 aa).

The Cytoplasmic segment spans residues 1–132 (MATLLRSKLT…WNVTNAIQGM (132 aa)). A helical transmembrane segment spans residues 133–153 (FVLGLPYAILHGGYLGLFLII). The Lumenal, vesicle segment spans residues 154–204 (FAAVVCCYTGKILIACLYEENEDGEVVRVRDSYVAIANACCAPRFPTLGGR). Tyr-186 is subject to 3'-nitrotyrosine. A helical membrane pass occupies residues 205 to 225 (VVNVAQIIELVMTCILYVVVS). Over 226 to 265 (GNLMYNSFPGLPVSQKSWSIIATAVLLPCAFLKNLKAVSK) the chain is Cytoplasmic. A helical membrane pass occupies residues 266–286 (FSLLCTLAHFVINILVIAYCL). The Lumenal, vesicle portion of the chain corresponds to 287–305 (SRARDWAWEKVKFYIDVKK). Residues 306-326 (FPISIGIIVFSYTSQIFLPSL) traverse the membrane as a helical segment. At 327–341 (EGNMQQPSEFHCMMN) the chain is on the cytoplasmic side. A helical membrane pass occupies residues 342–362 (WTHIAACVLKGLFALVAYLTW). The Lumenal, vesicle portion of the chain corresponds to 363–383 (ADETKEVITDNLPGSIRAVVN). The chain crosses the membrane as a helical span at residues 384–404 (IFLVAKALLSYPLPFFAAVEV). Residues 405 to 438 (LEKSLFQEGSRAFFPACYGGDGRLKSWGLTLRCA) are Cytoplasmic-facing. A helical membrane pass occupies residues 439-459 (LVVFTLLMAIYVPHFALLMGL). Residues 460 to 461 (TG) lie on the Lumenal, vesicle side of the membrane. Residues 462-482 (SLTGAGLCFLLPSLFHLRLLW) form a helical membrane-spanning segment. Residues 483–489 (RKLLWHQ) are Cytoplasmic-facing. A helical membrane pass occupies residues 490–510 (VFFDVAIFVIGGICSVSGFVH). Residues 511–525 (SLEGLIEAYRTNAED) are Lumenal, vesicle-facing.

It belongs to the amino acid/polyamine transporter 2 family. In terms of tissue distribution, brain. Expressed at high levels within the neocortex, hippocampus, cerebellum, striatum, septal nuclei and the reticular nucleus of the thalamus. Also expressed in islets where it is more abundant in the peripheral/mantle region. Highly expressed in the nerve endings of GABA neurons in the brain and spinal cord but also in glycinergic nerve endings. Expressed in glycine-, GABA- or GABA- and glycine-containing boutons.

The protein localises to the cytoplasmic vesicle. It localises to the secretory vesicle. It is found in the synaptic vesicle membrane. The protein resides in the presynapse. It carries out the reaction beta-alanine(out) + n H(+)(in) = beta-alanine(in) + n H(+)(out). It catalyses the reaction 4-aminobutanoate(out) + n H(+)(in) = 4-aminobutanoate(in) + n H(+)(out). The enzyme catalyses glycine(out) + n H(+)(in) = glycine(in) + n H(+)(out). Its function is as follows. Antiporter that exchanges vesicular protons for cytosolic 4-aminobutanoate or to a lesser extend glycine, thus allowing their secretion from nerve terminals. The transport is equally dependent on the chemical and electrical components of the proton gradient. May also transport beta-alanine. Acidification of GABAergic synaptic vesicles is a prerequisite for 4-aminobutanoate uptake. The protein is Vesicular inhibitory amino acid transporter of Rattus norvegicus (Rat).